Here is a 360-residue protein sequence, read N- to C-terminus: Pyrimidine monooxygenase RutA (360 aa).

FMN-binding positions include 49-50, N115, E124, 140-141, and S190; these read IK and RY.

This sequence belongs to the NtaA/SnaA/DszA monooxygenase family. RutA subfamily.

It catalyses the reaction uracil + FMNH2 + NADH + O2 = (Z)-3-ureidoacrylate + FMN + NAD(+) + H2O + H(+). The catalysed reaction is thymine + FMNH2 + NADH + O2 = (Z)-2-methylureidoacrylate + FMN + NAD(+) + H2O + H(+). Catalyzes the pyrimidine ring opening between N-3 and C-4 by an unusual flavin hydroperoxide-catalyzed mechanism, adding oxygen atoms in the process to yield ureidoacrylate peracid, that immediately reacts with FMN forming ureidoacrylate and FMN-N(5)-oxide. The FMN-N(5)-oxide reacts spontaneously with NADH to produce FMN. Requires the flavin reductase RutF to regenerate FMN in vivo. This chain is Pyrimidine monooxygenase RutA, found in Pseudomonas syringae pv. syringae (strain B728a).